The chain runs to 792 residues: uncharacterized protein (792 aa).

A substrate-binding site is contributed by 361–362 (WD). Glutamate 488 functions as the Proton donor in the catalytic mechanism. 590 to 591 (KQ) contributes to the substrate binding site. The disordered stretch occupies residues 753-792 (DSPSTIAVRDRKPLLPPPSQPPGREPVSRRHKSLIISAAR). The segment covering 766–776 (LLPPPSQPPGR) has biased composition (pro residues).

This sequence belongs to the glycosyl hydrolase 65 family.

This is an uncharacterized protein from Mycobacterium leprae (strain TN).